The primary structure comprises 419 residues: Serine hydroxymethyltransferase (419 aa).

Residues Leu-121 and 125–127 each bind (6S)-5,6,7,8-tetrahydrofolate; that span reads GHL. An N6-(pyridoxal phosphate)lysine modification is found at Lys-230. 355 to 357 serves as a coordination point for (6S)-5,6,7,8-tetrahydrofolate; the sequence is SPF.

Belongs to the SHMT family. In terms of assembly, homodimer. Pyridoxal 5'-phosphate serves as cofactor.

The protein localises to the cytoplasm. It catalyses the reaction (6R)-5,10-methylene-5,6,7,8-tetrahydrofolate + glycine + H2O = (6S)-5,6,7,8-tetrahydrofolate + L-serine. It participates in one-carbon metabolism; tetrahydrofolate interconversion. Its pathway is amino-acid biosynthesis; glycine biosynthesis; glycine from L-serine: step 1/1. Its function is as follows. Catalyzes the reversible interconversion of serine and glycine with tetrahydrofolate (THF) serving as the one-carbon carrier. This reaction serves as the major source of one-carbon groups required for the biosynthesis of purines, thymidylate, methionine, and other important biomolecules. Also exhibits THF-independent aldolase activity toward beta-hydroxyamino acids, producing glycine and aldehydes, via a retro-aldol mechanism. The chain is Serine hydroxymethyltransferase from Streptococcus uberis (strain ATCC BAA-854 / 0140J).